The chain runs to 275 residues: Hydroxyethylthiazole kinase (275 aa).

M50 contacts substrate. R126 and S171 together coordinate ATP. Residue A200 participates in substrate binding.

Belongs to the Thz kinase family. Mg(2+) is required as a cofactor.

The catalysed reaction is 5-(2-hydroxyethyl)-4-methylthiazole + ATP = 4-methyl-5-(2-phosphooxyethyl)-thiazole + ADP + H(+). It functions in the pathway cofactor biosynthesis; thiamine diphosphate biosynthesis; 4-methyl-5-(2-phosphoethyl)-thiazole from 5-(2-hydroxyethyl)-4-methylthiazole: step 1/1. Its function is as follows. Catalyzes the phosphorylation of the hydroxyl group of 4-methyl-5-beta-hydroxyethylthiazole (THZ). The sequence is that of Hydroxyethylthiazole kinase from Acinetobacter baumannii (strain ACICU).